The chain runs to 211 residues: Guanylate kinase (211 aa).

Residues Gly-7–Arg-187 enclose the Guanylate kinase-like domain. Gly-14–Ala-21 is a binding site for ATP.

It belongs to the guanylate kinase family.

It localises to the cytoplasm. It carries out the reaction GMP + ATP = GDP + ADP. Essential for recycling GMP and indirectly, cGMP. This chain is Guanylate kinase, found in Aster yellows witches'-broom phytoplasma (strain AYWB).